The following is a 427-amino-acid chain: Glutamate-1-semialdehyde 2,1-aminomutase (427 aa).

Lysine 267 is subject to N6-(pyridoxal phosphate)lysine.

It belongs to the class-III pyridoxal-phosphate-dependent aminotransferase family. HemL subfamily. Homodimer. Pyridoxal 5'-phosphate serves as cofactor.

The protein localises to the cytoplasm. The enzyme catalyses (S)-4-amino-5-oxopentanoate = 5-aminolevulinate. It functions in the pathway porphyrin-containing compound metabolism; protoporphyrin-IX biosynthesis; 5-aminolevulinate from L-glutamyl-tRNA(Glu): step 2/2. The protein is Glutamate-1-semialdehyde 2,1-aminomutase of Sulfurihydrogenibium azorense (strain DSM 15241 / OCM 825 / Az-Fu1).